Consider the following 134-residue polypeptide: uncharacterized protein (134 aa).

The protein localises to the cell membrane. May have a role in the regulation of NDH-1 biosynthesis. This is an uncharacterized protein from Paracoccus denitrificans.